We begin with the raw amino-acid sequence, 174 residues long: 3-hydroxydecanoyl-[acyl-carrier-protein] dehydratase (174 aa).

Residue His73 is part of the active site.

This sequence belongs to the thioester dehydratase family. FabA subfamily. As to quaternary structure, homodimer.

The protein resides in the cytoplasm. It carries out the reaction a (3R)-hydroxyacyl-[ACP] = a (2E)-enoyl-[ACP] + H2O. It catalyses the reaction (3R)-hydroxydecanoyl-[ACP] = (2E)-decenoyl-[ACP] + H2O. The enzyme catalyses (2E)-decenoyl-[ACP] = (3Z)-decenoyl-[ACP]. It functions in the pathway lipid metabolism; fatty acid biosynthesis. Necessary for the introduction of cis unsaturation into fatty acids. Catalyzes the dehydration of (3R)-3-hydroxydecanoyl-ACP to E-(2)-decenoyl-ACP and then its isomerization to Z-(3)-decenoyl-ACP. Can catalyze the dehydratase reaction for beta-hydroxyacyl-ACPs with saturated chain lengths up to 16:0, being most active on intermediate chain length. In Cellvibrio japonicus (strain Ueda107) (Pseudomonas fluorescens subsp. cellulosa), this protein is 3-hydroxydecanoyl-[acyl-carrier-protein] dehydratase.